The following is a 462-amino-acid chain: MDAMQKTIEYTSVSRIAGPLMVIDGIEGIAYGEIVDITTPNGDKRTGQVLEAREEIAVVQVFEGTSELNTSETKVRFTGDTAKIGVSYDMLGRIFNGAGKPLDGGPEIIAEEKLDINGYPLNPVSRNPPNAFVQTGVSTIDGTNTLVRGQKIPIFSGSGLPHNKLATQIARQAKVRGEGEQFAVVFAAMGITGEESNYFMDEFKKTGALEKAVVFINLADDPAIERILTPRIALTTAEYLAYEKGMHVLVILTDLTNYCEALREIAAARNEVPGRRGYPGYMYTDLACLYERAGRVKGKEGTVTQIPILTMPDDDITHPIPDLTGYITEGQIVLSRELNRKGVYPPVDILPSLSRLAGNGQGEGKTRDDHSKVISQAYAAYAEGRGLRDLVAVVGEEALTERDRSFLKFADAFENSIVTQGVDEDRSIEETLDYVWDLLTILPREELKRVSDELIEKYLPKK.

The protein belongs to the ATPase alpha/beta chains family. As to quaternary structure, has multiple subunits with at least A(3), B(3), C, D, E, F, H, I and proteolipid K(x).

The protein resides in the cell membrane. Component of the A-type ATP synthase that produces ATP from ADP in the presence of a proton gradient across the membrane. The B chain is a regulatory subunit. The protein is A-type ATP synthase subunit B of Methanococcus maripaludis (strain DSM 14266 / JCM 13030 / NBRC 101832 / S2 / LL).